The following is a 103-amino-acid chain: N(4)-acetylcytidine amidohydrolase (103 aa).

An ASCH domain is found at 6–101; it reads ITFFQRFQDD…QIQFYVIEFK (96 aa). Lysine 21 serves as the catalytic Proton acceptor. Threonine 24 serves as the catalytic Nucleophile. Glutamate 74 acts as the Proton donor in catalysis.

Belongs to the N(4)-acetylcytidine amidohydrolase family.

The catalysed reaction is N(4)-acetylcytidine + H2O = cytidine + acetate + H(+). The enzyme catalyses N(4)-acetyl-2'-deoxycytidine + H2O = 2'-deoxycytidine + acetate + H(+). It catalyses the reaction N(4)-acetylcytosine + H2O = cytosine + acetate + H(+). Its function is as follows. Catalyzes the hydrolysis of N(4)-acetylcytidine (ac4C). In Escherichia coli (strain SMS-3-5 / SECEC), this protein is N(4)-acetylcytidine amidohydrolase (yqfB).